The following is a 1687-amino-acid chain: Gag-Pol polyprotein (1687 aa).

A lipid anchor (N-myristoyl glycine; by host) is attached at Gly-2. 2 disordered regions span residues 106–197 (SSPE…VILP) and 420–490 (HKRE…LDKD). The PTAP/PSAP motif motif lies at 108–111 (PENT). A compositionally biased stretch (pro residues) spans 139 to 157 (EPPPYPAALPPPLAPPAVG). The short motif at 140–143 (PPPY) is the PPXY motif element. Positions 408–455 (LQDLVREAEKVYHKRETEEERQEREKKEAEERERRRDRRQEKNLTRIL) form a coiled coil. Basic and acidic residues-rich tracts occupy residues 420-451 (HKRE…EKNL) and 479-490 (TPRDGRPPLDKD). The CCHC-type zinc finger occupies 490-507 (DQCAYCKEKGHWARECPQ). Positions 544 to 614 (IEFLVDTGAE…CPAPLLGRDL (71 aa)) constitute a Peptidase A2 domain. Residue Asp-549 is the Protease; shared with dimeric partner of the active site. One can recognise a Reverse transcriptase domain in the interval 721–912 (LDLGVLVPCQ…KEVTYLGYLL (192 aa)). The Mg(2+) site is built by Asp-789, Asp-863, Asp-864, Asp-1180, Glu-1200, Asp-1221, and Asp-1291. An RNase H type-1 domain is found at 1153–1299 (LPGVPAWYTD…ADEAAKQAAL (147 aa)). The HHCC-type zinc finger occupies 1339 to 1377 (HQLTHLGPEKLLQLVNRTSLLIPNLQSAVREVTSQCQAC). Residues 1394-1552 (RGDRPGVYWE…TPYEILYGGP (159 aa)) enclose the Integrase catalytic domain. Residues Asp-1405 and Asp-1464 each contribute to the Mg(2+) site.

It belongs to the retroviral Pol polyprotein family. Homohexamer; further associates as homomultimer. The virus core is composed of a lattice formed from hexagonal rings, each containing six capsid monomers. As to quaternary structure, interacts (via PPXY motif) with host NEDD4. Interacts (via PSAP motif) with host TSG101. In terms of assembly, the reverse transcriptase is a monomer (Potential). Interacts (via RNase domains) with host release factor ETF1; this interaction is essential for translational readthrough of amber codon between viral gag and pol genes, as well as for viral replication. Homodimer. Mg(2+) is required as a cofactor. Post-translationally, specific enzymatic cleavages by the viral protease yield mature proteins. The protease is released by autocatalytic cleavage. The polyprotein is cleaved during and after budding, this process is termed maturation. Phosphorylated on serine residues.

It is found in the virion. The protein localises to the host cell membrane. The protein resides in the host late endosome membrane. It localises to the host endosome. Its subcellular location is the host multivesicular body. It is found in the host cytoplasm. It catalyses the reaction DNA(n) + a 2'-deoxyribonucleoside 5'-triphosphate = DNA(n+1) + diphosphate. The enzyme catalyses Endonucleolytic cleavage to 5'-phosphomonoester.. Most efficiently inhibited by Amprenavir, which is able to block Gag-Pol processing in infected cells. Its function is as follows. Plays a role in budding and is processed by the viral protease during virion maturation outside the cell. During budding, it recruits, in a PPXY-dependent or independent manner, Nedd4-like ubiquitin ligases that conjugate ubiquitin molecules to Gag-Pol, or to Gag-Pol binding host factors. Interaction with HECT ubiquitin ligases probably links the viral protein to the host ESCRT pathway and facilitates release. Targets Gag and gag-pol polyproteins to the plasma membrane via a multipartite membrane binding signal, that includes its myristoylated N-terminus. Also mediates nuclear localization of the pre-integration complex. Functionally, constituent of the pre-integration complex (PIC) which tethers the latter to mitotic chromosomes. This allows the integration of the viral genome into the host DNA. In terms of biological role, forms the spherical core of the virion that encapsulates the genomic RNA-nucleocapsid complex. Its function is as follows. Involved in the packaging and encapsidation of two copies of the genome. Binds with high affinity to conserved UCUG elements within the packaging signal, located near the 5'-end of the genome. This binding is dependent on genome dimerization. Acts as a nucleic acid chaperone which is involved in rearrangement of nucleic acid secondary structures during gRNA retrotranscription. The aspartyl protease mediates proteolytic cleavages of Gag and Gag-Pol polyproteins during or shortly after the release of the virion from the plasma membrane. Cleavages take place as an ordered, step-wise cascade to yield mature proteins. This process is called maturation. Displays maximal activity during the budding process just prior to particle release from the cell. Functionally, RT is a multifunctional enzyme that converts the viral dimeric RNA genome into dsDNA in the cytoplasm, shortly after virus entry into the cell. This enzyme displays a DNA polymerase activity that can copy either DNA or RNA templates, and a ribonuclease H (RNase H) activity that cleaves the RNA strand of RNA-DNA heteroduplexes in a partially processive 3' to 5' endonucleasic mode. Conversion of viral genomic RNA into dsDNA requires many steps. A tRNA binds to the primer-binding site (PBS) situated at the 5' end of the viral RNA. RT uses the 3' end of the tRNA primer to perform a short round of RNA-dependent minus-strand DNA synthesis. The reading proceeds through the U5 region and ends after the repeated (R) region which is present at both ends of viral RNA. The portion of the RNA-DNA heteroduplex is digested by the RNase H, resulting in a ssDNA product attached to the tRNA primer. This ssDNA/tRNA hybridizes with the identical R region situated at the 3' end of viral RNA. This template exchange, known as minus-strand DNA strong stop transfer, can be either intra- or intermolecular. RT uses the 3' end of this newly synthesized short ssDNA to perform the RNA-dependent minus-strand DNA synthesis of the whole template. RNase H digests the RNA template except for a polypurine tract (PPT) situated at the 5' end of the genome. It is not clear if both polymerase and RNase H activities are simultaneous. RNase H probably can proceed both in a polymerase-dependent (RNA cut into small fragments by the same RT performing DNA synthesis) and a polymerase-independent mode (cleavage of remaining RNA fragments by free RTs). Secondly, RT performs DNA-directed plus-strand DNA synthesis using the PPT that has not been removed by RNase H as primers. PPT and tRNA primers are then removed by RNase H. The 3' and 5' ssDNA PBS regions hybridize to form a circular dsDNA intermediate. Strand displacement synthesis by RT to the PBS and PPT ends produces a blunt ended, linear dsDNA copy of the viral genome that includes long terminal repeats (LTRs) at both ends. In terms of biological role, catalyzes viral DNA integration into the host chromosome, by performing a series of DNA cutting and joining reactions. This enzyme activity takes place after virion entry into a cell and reverse transcription of the RNA genome in dsDNA. The first step in the integration process is 3' processing. This step requires a complex comprising the viral genome, matrix protein and integrase. This complex is called the pre-integration complex (PIC). The integrase protein removes 2 nucleotides from each 3' end of the viral DNA, leaving recessed CA OH's at the 3' ends. In the second step that requires cell division, the PIC enters cell nucleus. In the third step, termed strand transfer, the integrase protein joins the previously processed 3' ends to the 5' ends of strands of target cellular DNA at the site of integration. The last step is viral DNA integration into host chromosome. The chain is Gag-Pol polyprotein (pol) from Woolly monkey sarcoma virus (WMSV).